Consider the following 227-residue polypeptide: Ribosomal RNA small subunit methyltransferase G (227 aa).

S-adenosyl-L-methionine contacts are provided by residues G74, L79, 124–125 (AE), and R142.

The protein belongs to the methyltransferase superfamily. RNA methyltransferase RsmG family.

It localises to the cytoplasm. Its function is as follows. Specifically methylates the N7 position of guanine in position 518 of 16S rRNA. The protein is Ribosomal RNA small subunit methyltransferase G of Mycolicibacterium gilvum (strain PYR-GCK) (Mycobacterium gilvum (strain PYR-GCK)).